A 151-amino-acid polypeptide reads, in one-letter code: Putative coiled-coil-helix-coiled-coil-helix domain-containing protein CHCHD2P9, mitochondrial (151 aa).

A mitochondrion-targeting transit peptide spans 1–9 (MPRGSRSRT). Disordered regions lie at residues 1-50 (MPRG…AAAP) and 75-110 (TQGH…PAQQ). Low complexity predominate over residues 10–26 (SRMAPPASRAPQMRAAP). Residues 27–38 (RPAPVAQPPAAA) show a composition bias toward pro residues. 2 stretches are compositionally biased toward low complexity: residues 39-50 (PPSAVGSSAAAP) and 100-110 (QEPQGTQPAQQ). The CHCH domain occupies 111-151 (QQPCFYGIKQFLECAQNQGDIKLCEDFSKVLKQCRLAKGLA). 2 consecutive short sequence motifs (cx9C motif) follow at residues 114 to 124 (CFYGIKQFLEC) and 134 to 144 (CEDFSKVLKQC). 2 disulfides stabilise this stretch: C114/C144 and C124/C134.

Its subcellular location is the mitochondrion. The sequence is that of Putative coiled-coil-helix-coiled-coil-helix domain-containing protein CHCHD2P9, mitochondrial (CHCHD2P9) from Homo sapiens (Human).